A 197-amino-acid polypeptide reads, in one-letter code: Protein GrpE (197 aa).

Over residues 1–31 the composition is skewed to basic and acidic residues; sequence MSDDTKKQDTAADAEVEKEMEGVPEHLRDDR. Residues 1-48 form a disordered region; the sequence is MSDDTKKQDTAADAEVEKEMEGVPEHLRDDRGSEEDASDDLSAALESL.

It belongs to the GrpE family. As to quaternary structure, homodimer.

The protein localises to the cytoplasm. Functionally, participates actively in the response to hyperosmotic and heat shock by preventing the aggregation of stress-denatured proteins, in association with DnaK and GrpE. It is the nucleotide exchange factor for DnaK and may function as a thermosensor. Unfolded proteins bind initially to DnaJ; upon interaction with the DnaJ-bound protein, DnaK hydrolyzes its bound ATP, resulting in the formation of a stable complex. GrpE releases ADP from DnaK; ATP binding to DnaK triggers the release of the substrate protein, thus completing the reaction cycle. Several rounds of ATP-dependent interactions between DnaJ, DnaK and GrpE are required for fully efficient folding. In Erythrobacter litoralis (strain HTCC2594), this protein is Protein GrpE.